The following is an 85-amino-acid chain: Large ribosomal subunit protein bL27 (85 aa).

Residues 1–21 are disordered; that stretch reads MAHKKAGGSTRNGRDSNAKRL.

Belongs to the bacterial ribosomal protein bL27 family.

This chain is Large ribosomal subunit protein bL27, found in Erwinia tasmaniensis (strain DSM 17950 / CFBP 7177 / CIP 109463 / NCPPB 4357 / Et1/99).